A 425-amino-acid chain; its full sequence is uncharacterized protein (425 aa).

Residues 2-53 (SFNLLDLPIVPRQKALKYLEPIDLFELSLCSKRMAQSVRDLKIEASAHFITL) form the F-box domain.

This is an uncharacterized protein from Caenorhabditis elegans.